Consider the following 99-residue polypeptide: Teretoxin Tsu6.4 (99 aa).

An N-terminal signal peptide occupies residues 1 to 21 (MRLLLILVLLTPVIVAFSVDE). A propeptide spanning residues 22–53 (ELNNADGANAASFTADQEVRHKRNLFPAIARR) is cleaved from the precursor.

Contains 3 disulfide bonds. As to expression, expressed by the venom duct.

The protein resides in the secreted. This Terebra subulata (Chocolate spotted auger) protein is Teretoxin Tsu6.4.